A 524-amino-acid chain; its full sequence is Cytochrome P450 monooxygenase drtD (524 aa).

Residues 2-22 (SDTYLVAASGLAVCFFVLYLL) form a helical membrane-spanning segment. Cys418 serves as a coordination point for heme.

Belongs to the cytochrome P450 family. Heme serves as cofactor.

The protein localises to the membrane. It functions in the pathway secondary metabolite biosynthesis; terpenoid biosynthesis. Cytochrome P450 monooxygenase; part of the gene cluster that mediates the biosynthesis of various drimane-type sesquiterpene esters, compounds that exhibit diverse biological activities and are widely present in eukaryotes. The pathway begins with the synthesis of the backbone drimenol by the terpene cyclase drtB using farnesyl pyrophosphate (FPP) as substrate. The cytochrome P450 monooxygenase drtD is then responsible for the hydroxylations at C-6, C-9 and C-12, as well as the oxidation of hydroxyl groups at C-6 and C-11 to a ketone and an aldehyde, respectively. Then, the biosynthesis can go in two directions, either the hydroxylated drimenol is further hydroxylated at C-2 and C-3 by an enzyme(s) not associated with the drt cluster, or the FAD-binding oxidoreductase drtC further oxidizes C-11 or C-12 to form the butyrolactone ring. DrtB, drtD and drtC are solely responsible for the formation of the different drimane structures observed during drimane sesquiterpenes biosynthesis. The polyketide synthase drtA synthesizes different lengths (C6 and C8) of PKS chains, which are then oxidized to varying degrees by the short-chain dehydrogenase drtF. Finally, these PKS chains are transferred onto drimane sesquiterpenes by the acyltransferase drtE, forming the sesquiterpene esters. In addition to the different fatty acyl-CoA chains produced by drtA, drtE is also able to use cinnamoyl-CoA as a substrate. This Aspergillus calidoustus protein is Cytochrome P450 monooxygenase drtD.